The chain runs to 249 residues: Salivary antigen-5 (249 aa).

Positions 1 to 26 (MAKTQCPLVFSLLALALIGTLQSSAA) are cleaved as a signal peptide. The 144-residue stretch at 50-193 (SIHNYYRNLT…WYAGYLVCNY (144 aa)) folds into the SCP domain. 3 N-linked (GlcNAc...) asparagine glycosylation sites follow: asparagine 57, asparagine 127, and asparagine 168.

This sequence belongs to the CRISP family. Venom allergen 5-like subfamily. In terms of assembly, monomeric in solution. Cu(2+) serves as cofactor. In terms of tissue distribution, saliva (at protein level). Salivary gland (at protein level).

It localises to the secreted. Its function is as follows. Antioxidant protein that scavenges superoxide radicals. Removes superoxide radicals produced by PMA-stimulated host neutrophils. Inhibits host platelet aggregation induced by low doses of collagen by interfering with the pro-aggregatory properties of reactive oxygen species on platelets. Binds to heparin and sulfated glycosaminoglycans. The protein is Salivary antigen-5 of Dipetalogaster maximus (Blood-sucking bug).